The chain runs to 298 residues: Glycine--tRNA ligase alpha subunit (298 aa).

It belongs to the class-II aminoacyl-tRNA synthetase family. As to quaternary structure, tetramer of two alpha and two beta subunits.

It localises to the cytoplasm. The enzyme catalyses tRNA(Gly) + glycine + ATP = glycyl-tRNA(Gly) + AMP + diphosphate. In Helicobacter pylori (strain HPAG1), this protein is Glycine--tRNA ligase alpha subunit.